The chain runs to 2362 residues: Filaggrin-2 (2362 aa).

The segment at methionine 1–leucine 81 is S-100-like. EF-hand domains lie at valine 8–proline 43 and aspartate 49–alanine 84. Residues aspartate 62, aspartate 64, aspartate 66, arginine 68, and glutamate 73 each contribute to the Ca(2+) site. 2 disordered regions span residues alanine 96 to cysteine 238 and glycine 284 to proline 2109. Residues glutamate 111–glutamate 120 show a composition bias toward acidic residues. Composition is skewed to basic and acidic residues over residues lysine 159 to arginine 174 and asparagine 189 to glutamate 214. 2 Filaggrin repeats span residues glycine 261 to cysteine 308 and histidine 373 to phenylalanine 414. Polar residues-rich tracts occupy residues glycine 284–glycine 317, serine 342–serine 375, and glycine 383–methionine 395. Residues serine 396–serine 411 are compositionally biased toward low complexity. Polar residues-rich tracts occupy residues alanine 421 to phenylalanine 443 and serine 450 to serine 469. Low complexity-rich tracts occupy residues glycine 474–glycine 519, glycine 539–glycine 550, and serine 567–glutamine 580. One copy of the Filaggrin 3 repeat lies at glutamine 555–glutamine 607. Residues glutamine 581–threonine 590 are compositionally biased toward gly residues. A compositionally biased stretch (low complexity) spans serine 599–serine 618. Gly residues predominate over residues glycine 632 to glutamate 653. Low complexity predominate over residues histidine 654 to serine 675. The Filaggrin 4 repeat unit spans residues glycine 672–serine 723. Residues threonine 682 to glycine 694 are compositionally biased toward gly residues. 3 stretches are compositionally biased toward low complexity: residues serine 695–histidine 705, glycine 728–serine 754, and glycine 780–glycine 798. A compositionally biased stretch (gly residues) spans threonine 826–glycine 838. Low complexity predominate over residues serine 846 to glycine 864. The Filaggrin 5 repeat unit spans residues histidine 880–glutamate 927. Polar residues-rich tracts occupy residues alanine 886–serine 896 and alanine 912–phenylalanine 925. Residues glutamate 973–valine 982 are compositionally biased toward basic and acidic residues. A Filaggrin 6 repeat occupies proline 984–tyrosine 1035. A compositionally biased stretch (polar residues) spans glycine 1014–tyrosine 1035. Residues glutamate 1047 to glutamine 1059 show a composition bias toward basic and acidic residues. Basic residues predominate over residues cysteine 1067–histidine 1077. Positions glycine 1104 to proline 1121 are enriched in low complexity. A compositionally biased stretch (gly residues) spans serine 1142–glutamine 1152. Over residues histidine 1162 to aspartate 1174 the composition is skewed to polar residues. The stretch at glutamine 1165–histidine 1210 is one Filaggrin 7 repeat. The segment covering serine 1175–arginine 1193 has biased composition (low complexity). Phosphoserine is present on residues serine 1198, serine 1204, and serine 1205. The segment covering serine 1220–glutamine 1232 has biased composition (gly residues). Residues serine 1255–arginine 1273 show a composition bias toward low complexity. Phosphoserine occurs at positions 1278, 1284, and 1285. One copy of the Filaggrin 8 repeat lies at valine 1280–serine 1334. Residues serine 1300–glutamine 1310 show a composition bias toward gly residues. A compositionally biased stretch (low complexity) spans serine 1333 to arginine 1351. Phosphoserine occurs at positions 1356, 1362, and 1363. Basic and acidic residues predominate over residues glutamate 1377–histidine 1396. Over residues proline 1413 to proline 1436 the composition is skewed to low complexity. 2 positions are modified to phosphoserine: serine 1438 and serine 1439. Residues serine 1454–glutamine 1464 show a composition bias toward gly residues. The stretch at histidine 1474–histidine 1522 is one Filaggrin 9 repeat. The segment covering serine 1487–arginine 1505 has biased composition (low complexity). Serine 1510, serine 1516, and serine 1517 each carry phosphoserine. A compositionally biased stretch (gly residues) spans serine 1532 to glutamine 1544. The span at serine 1567 to arginine 1585 shows a compositional bias: low complexity. Residues serine 1590, serine 1596, and serine 1597 each carry the phosphoserine modification. Low complexity-rich tracts occupy residues serine 1643–arginine 1661 and glutamine 1683–glutamine 1696. The segment covering histidine 1698 to histidine 1708 has biased composition (basic and acidic residues). A Filaggrin 10 repeat occupies arginine 1723–histidine 1756. The span at glutamine 1724–arginine 1739 shows a compositional bias: low complexity. 6 positions are modified to phosphoserine: serine 1744, serine 1750, serine 1751, serine 1824, serine 1830, and serine 1831. The segment covering serine 1801–proline 1825 has biased composition (low complexity). Residues glutamate 1829–histidine 1848 are compositionally biased toward basic and acidic residues. Low complexity predominate over residues serine 1879–arginine 1897. Phosphoserine occurs at positions 1902, 1908, and 1909. The span at serine 1924 to glutamine 1934 shows a compositional bias: gly residues. Positions arginine 1949 to arginine 1975 are enriched in low complexity. Residues serine 1980, serine 1986, and serine 1987 each carry the phosphoserine modification. Gly residues predominate over residues serine 2002–glutamine 2012. The Filaggrin 11 repeat unit spans residues glutamine 2016–glutamine 2070. Polar residues-rich tracts occupy residues glycine 2026 to lysine 2048, histidine 2061 to histidine 2079, and leucine 2100 to proline 2109. Serine 2104 carries the post-translational modification Phosphoserine. The stretch at aspartate 2218 to leucine 2259 is one Filaggrin 12 repeat.

This sequence belongs to the S100-fused protein family. It in the N-terminal section; belongs to the S-100 family. In terms of processing, deiminated by PADI1, PADI2 or PADI3 in vitro. The deiminated form is degraded by calpain-1/CAPN1 more quickly and into shorter peptides than the intact protein. May be processed by calpain-1/CAPN1.

It localises to the cytoplasm. The protein resides in the cytoplasmic granule. Its function is as follows. Essential for normal cell-cell adhesion in the cornified cell layers. Important for proper integrity and mechanical strength of the stratum corneum of the epidermis. This Mus musculus (Mouse) protein is Filaggrin-2 (Flg2).